Here is a 213-residue protein sequence, read N- to C-terminus: MTTCFVLASKSPARLRMLRSAGIEPVVIASGADESHLRGEDAVAMTARLSRLKAHSVIESGALEEYPADRMIVVACDSVLNLDGRILGKPHTAERARQWWRRMRGHQGVLVSGHHVAVIVNGQLREQTRIGQTVVTFADLTDAEIDAYVDSGEPAAVAGAFTIDGLGGAFITRINGDPHNVTGISLPLLRQMLMDLDVEWSSLWNGPKGGHLS.

Asp77 (proton acceptor) is an active-site residue.

It belongs to the Maf family. It depends on a divalent metal cation as a cofactor.

It localises to the cytoplasm. The enzyme catalyses a ribonucleoside 5'-triphosphate + H2O = a ribonucleoside 5'-phosphate + diphosphate + H(+). The catalysed reaction is a 2'-deoxyribonucleoside 5'-triphosphate + H2O = a 2'-deoxyribonucleoside 5'-phosphate + diphosphate + H(+). Its function is as follows. Nucleoside triphosphate pyrophosphatase. May have a dual role in cell division arrest and in preventing the incorporation of modified nucleotides into cellular nucleic acids. This chain is Nucleoside triphosphate pyrophosphatase, found in Cutibacterium acnes (strain DSM 16379 / KPA171202) (Propionibacterium acnes).